The sequence spans 465 residues: Lactaldehyde dehydrogenase (465 aa).

220-225 serves as a coordination point for NAD(+); the sequence is GSVEVG. Catalysis depends on residues glutamate 240 and cysteine 274.

This sequence belongs to the aldehyde dehydrogenase family. In terms of assembly, homotetramer.

It catalyses the reaction (S)-lactaldehyde + NAD(+) + H2O = (S)-lactate + NADH + 2 H(+). It functions in the pathway cofactor biosynthesis; coenzyme F420 biosynthesis. In terms of biological role, involved in F420 biosynthesis through the oxidation of lactaldehyde to lactate. This Methanococcus vannielii (strain ATCC 35089 / DSM 1224 / JCM 13029 / OCM 148 / SB) protein is Lactaldehyde dehydrogenase.